The following is a 102-amino-acid chain: uncharacterized protein (102 aa).

The [3Fe-4S] cluster site is built by C10, C16, and C55. The disordered stretch occupies residues D66 to V102. Positions A82–R93 are enriched in basic and acidic residues.

Requires [3Fe-4S] cluster as cofactor.

Its function is as follows. Electron transport protein for the cytochrome systems. This is an uncharacterized protein from Sinorhizobium fredii (strain NBRC 101917 / NGR234).